A 472-amino-acid polypeptide reads, in one-letter code: 3-isopropylmalate dehydratase large subunit (472 aa).

[4Fe-4S] cluster contacts are provided by Cys353, Cys414, and Cys417.

It belongs to the aconitase/IPM isomerase family. LeuC type 1 subfamily. In terms of assembly, heterodimer of LeuC and LeuD. [4Fe-4S] cluster is required as a cofactor.

The enzyme catalyses (2R,3S)-3-isopropylmalate = (2S)-2-isopropylmalate. It participates in amino-acid biosynthesis; L-leucine biosynthesis; L-leucine from 3-methyl-2-oxobutanoate: step 2/4. Its function is as follows. Catalyzes the isomerization between 2-isopropylmalate and 3-isopropylmalate, via the formation of 2-isopropylmaleate. The polypeptide is 3-isopropylmalate dehydratase large subunit (Acinetobacter baumannii (strain AB307-0294)).